The chain runs to 264 residues: Thymidylate synthase (264 aa).

Position 21 (Arg21) interacts with dUMP. His51 contributes to the (6R)-5,10-methylene-5,6,7,8-tetrahydrofolate binding site. Residue 126–127 (RR) coordinates dUMP. Cys146 (nucleophile) is an active-site residue. Residues 166–169 (RSAD), Asn177, and 207–209 (HLY) each bind dUMP. Residue Asp169 coordinates (6R)-5,10-methylene-5,6,7,8-tetrahydrofolate. Ser263 contacts (6R)-5,10-methylene-5,6,7,8-tetrahydrofolate.

Belongs to the thymidylate synthase family. Bacterial-type ThyA subfamily. In terms of assembly, homodimer.

The protein resides in the cytoplasm. It carries out the reaction dUMP + (6R)-5,10-methylene-5,6,7,8-tetrahydrofolate = 7,8-dihydrofolate + dTMP. It participates in pyrimidine metabolism; dTTP biosynthesis. Functionally, catalyzes the reductive methylation of 2'-deoxyuridine-5'-monophosphate (dUMP) to 2'-deoxythymidine-5'-monophosphate (dTMP) while utilizing 5,10-methylenetetrahydrofolate (mTHF) as the methyl donor and reductant in the reaction, yielding dihydrofolate (DHF) as a by-product. This enzymatic reaction provides an intracellular de novo source of dTMP, an essential precursor for DNA biosynthesis. This is Thymidylate synthase from Neisseria gonorrhoeae (strain ATCC 700825 / FA 1090).